Reading from the N-terminus, the 103-residue chain is Large ribosomal subunit protein bL21 (103 aa).

The protein belongs to the bacterial ribosomal protein bL21 family. As to quaternary structure, part of the 50S ribosomal subunit. Contacts protein L20.

Its function is as follows. This protein binds to 23S rRNA in the presence of protein L20. The protein is Large ribosomal subunit protein bL21 of Verminephrobacter eiseniae (strain EF01-2).